The following is a 132-amino-acid chain: uncharacterized protein (132 aa).

One can recognise a BIG2 domain in the interval 45-115; that stretch reads VHMEKHKLKI…VVIVTTAEGK (71 aa).

It to B.anthracis BA1245.

This is an uncharacterized protein from Bacillus cereus (strain ATCC 14579 / DSM 31 / CCUG 7414 / JCM 2152 / NBRC 15305 / NCIMB 9373 / NCTC 2599 / NRRL B-3711).